The following is a 131-amino-acid chain: Small ribosomal subunit protein uS11 (131 aa).

Residues Met-1–Arg-15 show a composition bias toward basic residues. Residues Met-1–Ala-23 are disordered.

This sequence belongs to the universal ribosomal protein uS11 family. Part of the 30S ribosomal subunit. Interacts with proteins S7 and S18. Binds to IF-3.

Functionally, located on the platform of the 30S subunit, it bridges several disparate RNA helices of the 16S rRNA. Forms part of the Shine-Dalgarno cleft in the 70S ribosome. The protein is Small ribosomal subunit protein uS11 of Clostridium perfringens (strain 13 / Type A).